Reading from the N-terminus, the 748-residue chain is Cytosolic phospholipase A2 (748 aa).

Residues 1 to 178 are phospholipid binding; it reads MSFIDPYQHI…MKKLLGPKKS (178 aa). The residue at position 2 (serine 2) is a Phosphoserine. The C2 domain occupies 6 to 122; it reads PYQHIIVEHQ…KVGEKKEVPF (117 aa). Positions 40, 41, 43, 65, 93, 94, and 95 each coordinate Ca(2+). A PLA2c domain is found at 140–739; sequence SCPDLRFSMA…SNVEARKFFN (600 aa). Serine 228 serves as the catalytic Nucleophile. At threonine 268 the chain carries Phosphothreonine. A disordered region spans residues 427–458; it reads KHIVSNDSSDSDDEAQGPKGTENEEAEKEYQS. Residues serine 434, serine 435, and serine 437 each carry the phosphoserine modification. Position 505 is a phosphoserine; by MAPK (serine 505). Serine 515 carries the phosphoserine modification. Residue lysine 540 forms a Glycyl lysine isopeptide (Lys-Gly) (interchain with G-Cter in SUMO2) linkage. The Proton acceptor role is filled by aspartate 548. Lysine 605 is covalently cross-linked (Glycyl lysine isopeptide (Lys-Gly) (interchain with G-Cter in SUMO2)). Phosphoserine occurs at positions 726 and 728.

In terms of assembly, interacts with KAT5. In terms of processing, phosphorylated at both Ser-505 and Ser-726 in response to mitogenic stimuli. In terms of tissue distribution, expressed in various organs including uterus, kidney, spleen, liver, heart, lung and brain (at protein level).

It localises to the cytoplasm. It is found in the golgi apparatus membrane. The protein resides in the nucleus envelope. The catalysed reaction is a 1,2-diacyl-sn-glycero-3-phosphocholine + H2O = a 1-acyl-sn-glycero-3-phosphocholine + a fatty acid + H(+). It catalyses the reaction a 1-O-alkyl-2-acyl-sn-glycero-3-phosphocholine + H2O = a 1-O-alkyl-sn-glycero-3-phosphocholine + a fatty acid + H(+). The enzyme catalyses a 1-acyl-sn-glycero-3-phosphocholine + H2O = sn-glycerol 3-phosphocholine + a fatty acid + H(+). It carries out the reaction 1-hexadecanoyl-2-(5Z,8Z,11Z,14Z-eicosatetraenoyl)-sn-glycero-3-phosphocholine + H2O = 1-hexadecanoyl-sn-glycero-3-phosphocholine + (5Z,8Z,11Z,14Z)-eicosatetraenoate + H(+). The catalysed reaction is 1,2-di-(5Z,8Z,11Z,14Z-eicosatetraenoyl)-sn-glycero-3-phosphocholine + H2O = 1-(5Z,8Z,11Z,14Z-eicosatetraenoyl)-sn-glycero-3-phosphocholine + (5Z,8Z,11Z,14Z)-eicosatetraenoate + H(+). It catalyses the reaction 1-octadecanoyl-2-(5Z,8Z,11Z,14Z-eicosatetraenoyl)-sn-glycero-3-phosphocholine + H2O = 1-octadecanoyl-sn-glycero-3-phosphocholine + (5Z,8Z,11Z,14Z)-eicosatetraenoate + H(+). The enzyme catalyses 1-hexadecanoyl-2-(9Z,12Z-octadecadienoyl)-sn-glycero-3-phosphocholine + H2O = (9Z,12Z)-octadecadienoate + 1-hexadecanoyl-sn-glycero-3-phosphocholine + H(+). It carries out the reaction 1-octadecanoyl-2-(9Z,12Z,15Z-octadecatrienoyl)-sn-glycero-3-phosphocholine + H2O = (9Z,12Z,15Z)-octadecatrienoate + 1-octadecanoyl-sn-glycero-3-phosphocholine + H(+). The catalysed reaction is 1-(5Z,8Z,11Z,14Z-eicosatetraenoyl)-2-hexadecanoyl-sn-glycero-3-phosphocholine + H2O = 1-(5Z,8Z,11Z,14Z-eicosatetraenoyl)-sn-glycero-3-phosphocholine + hexadecanoate + H(+). It catalyses the reaction 1-O-hexadecyl-2-(5Z,8Z,11Z,14Z)-eicosatetraenoyl-sn-glycero-3-phosphocholine + H2O = 1-O-hexadecyl-sn-glycero-3-phosphocholine + (5Z,8Z,11Z,14Z)-eicosatetraenoate + H(+). The enzyme catalyses 1,2-di-(9Z-octadecenoyl)-sn-glycero-3-phospho-(1'-sn-glycerol) + H2O = 1-(9Z-octadecenoyl)-sn-glycero-3-phospho-(1'-sn-glycerol) + (9Z)-octadecenoate + H(+). It carries out the reaction 1-octadecanoyl-2-(5Z,8Z,11Z,14Z-eicosatetraenoyl)-sn-glycero-3-phosphate + H2O = 1-octadecanoyl-sn-glycero-3-phosphate + (5Z,8Z,11Z,14Z)-eicosatetraenoate + H(+). The catalysed reaction is 1-hexadecanoyl-sn-glycero-3-phosphocholine + H2O = sn-glycerol 3-phosphocholine + hexadecanoate + H(+). It catalyses the reaction 2-(prostaglandin E2)-sn-glycero-3-phosphoethanolamine + H2O = sn-glycero-3-phosphoethanolamine + prostaglandin E2 + H(+). The enzyme catalyses 2-[(15S)-hydroxy-(5Z,8Z,11Z,13E)-eicosatetraenoyl]-sn-glycero-3-phosphocholine + H2O = (15S)-hydroxy-(5Z,8Z,11Z,13E)-eicosatetraenoate + sn-glycerol 3-phosphocholine + H(+). It carries out the reaction 2-[(15R)-hydroxy-(5Z,8Z,11Z,13E)-eicosatetraenoyl]-sn-glycero-3-phosphocholine + H2O = (15R)-hydroxy-(5Z,8Z,11Z,13E)-eicosatetraenoate + sn-glycerol 3-phosphocholine + H(+). The catalysed reaction is 2-(prostaglandin E2)-sn-glycero-3-phosphocholine + H2O = prostaglandin E2 + sn-glycerol 3-phosphocholine + H(+). It catalyses the reaction 2-[(11R)-hydroxy-(5Z,8Z,12E,14Z)-eicosatetraenoyl]-sn-glycero-3-phosphocholine + H2O = (11R)-hydroxy-(5Z,8Z,12E,14Z)-eicosatetraenoate + sn-glycerol 3-phosphocholine + H(+). The enzyme catalyses 1-(5Z,8Z,11Z,14Z-eicosatetraenoyl)-2-O-hexadecyl-sn-glycero-3-phosphocholine + H2O = 2-O-hexadecyl-sn-glycero-3-phosphocholine + (5Z,8Z,11Z,14Z)-eicosatetraenoate + H(+). It carries out the reaction 1-octadecanoyl-2-(5Z,8Z,11Z,14Z-eicosatetraenoyl)-sn-glycero-3-phosphocholine + glycerol = 1-(5Z,8Z,11Z,14Z-eicosatetraenoyl)-glycerol + 1-octadecanoyl-sn-glycero-3-phosphocholine. The catalysed reaction is 1-octadecanoyl-2-(9Z,12Z,15Z-octadecatrienoyl)-sn-glycero-3-phosphocholine + glycerol = 1-(9Z,12Z,15Z-octadecatrienoyl)-glycerol + 1-octadecanoyl-sn-glycero-3-phosphocholine. The protein operates within membrane lipid metabolism; glycerophospholipid metabolism. It functions in the pathway lipid metabolism; arachidonate metabolism. Its pathway is lipid metabolism; prostaglandin biosynthesis. It participates in lipid metabolism; leukotriene B4 biosynthesis. With respect to regulation, activated by cytosolic calcium, which is necessary for binding to membrane lipids. Activated by phosphorylation in response to mitogenic stimuli. Stimulated by agonists such as ATP and thrombin. Functionally, has primarily calcium-dependent phospholipase and lysophospholipase activities, with a major role in membrane lipid remodeling and biosynthesis of lipid mediators of the inflammatory response. Plays an important role in embryo implantation and parturition through its ability to trigger prostanoid production. Preferentially hydrolyzes the ester bond of the fatty acyl group attached at sn-2 position of phospholipids (phospholipase A2 activity). Selectively hydrolyzes sn-2 arachidonoyl group from membrane phospholipids, providing the precursor for eicosanoid biosynthesis via the cyclooxygenase pathway. In an alternative pathway of eicosanoid biosynthesis, hydrolyzes sn-2 fatty acyl chain of eicosanoid lysophopholipids to release free bioactive eicosanoids. Hydrolyzes the ester bond of the fatty acyl group attached at sn-1 position of phospholipids (phospholipase A1 activity) only if an ether linkage rather than an ester linkage is present at the sn-2 position. This hydrolysis is not stereospecific. Has calcium-independent phospholipase A2 and lysophospholipase activities in the presence of phosphoinositides. Has O-acyltransferase activity. Catalyzes the transfer of fatty acyl chains from phospholipids to a primary hydroxyl group of glycerol (sn-1 or sn-3), potentially contributing to monoacylglycerol synthesis. The protein is Cytosolic phospholipase A2 (Pla2g4a) of Mus musculus (Mouse).